Consider the following 493-residue polypeptide: Alpha-amylase-related protein (493 aa).

Positions 1-19 (MFKLALTLTLCLAGSLSLA) are cleaved as a signal peptide. Pyrrolidone carboxylic acid is present on Q20. A disulfide bridge links C47 with C103. Ca(2+) is bound by residues N117, Q168, and D177. C156 and C170 are joined by a disulfide. R205 serves as a coordination point for chloride. D207 functions as the Nucleophile in the catalytic mechanism. H211 contributes to the Ca(2+) binding site. E244 functions as the Proton donor in the catalytic mechanism. Residues N307 and R342 each coordinate chloride. Disulfide bonds link C375-C381, C417-C440, and C447-C459.

The protein belongs to the glycosyl hydrolase 13 family. In terms of assembly, monomer. It depends on Ca(2+) as a cofactor. Chloride serves as cofactor.

The protein resides in the secreted. It carries out the reaction Endohydrolysis of (1-&gt;4)-alpha-D-glucosidic linkages in polysaccharides containing three or more (1-&gt;4)-alpha-linked D-glucose units.. This chain is Alpha-amylase-related protein (Amyrel), found in Drosophila teissieri (Fruit fly).